A 151-amino-acid polypeptide reads, in one-letter code: Arginine repressor (151 aa).

The protein belongs to the ArgR family.

The protein resides in the cytoplasm. The protein operates within amino-acid biosynthesis; L-arginine biosynthesis [regulation]. Its function is as follows. Regulates arginine biosynthesis genes. This is Arginine repressor from Enterococcus faecalis (strain ATCC 700802 / V583).